The sequence spans 298 residues: MSLKLDGKKLSLEIEKRLNDYISNNKIIAKRVPGLAVIRIGEDPASGVYVNNKEKACSRIGIKSFIFHLDESVEQKEVEQLIIKLNSDKDIDGMLLQLPIPKKFDEQKLISHINPSKDVDGLNEINIGKLVKNEPGMRSCTPAGIINLLRSQNITIEGKKIVVIGRSLLVGKPLSLMLLNLNGTVTMTHSKTLNLNKVCREADILIAAAGKPNLIDSSFVKEGAVIIDVGIHRLKSSDKNQTRLCGDVLLEDVISKVFAYTPVPGGVGPMTVTMLLVNTIFSWQKQFGLSSTLNDLLP.

Residues 165–167 (GRS), Ser-190, and Ile-231 contribute to the NADP(+) site.

Belongs to the tetrahydrofolate dehydrogenase/cyclohydrolase family. In terms of assembly, homodimer.

The enzyme catalyses (6R)-5,10-methylene-5,6,7,8-tetrahydrofolate + NADP(+) = (6R)-5,10-methenyltetrahydrofolate + NADPH. It carries out the reaction (6R)-5,10-methenyltetrahydrofolate + H2O = (6R)-10-formyltetrahydrofolate + H(+). Its pathway is one-carbon metabolism; tetrahydrofolate interconversion. Functionally, catalyzes the oxidation of 5,10-methylenetetrahydrofolate to 5,10-methenyltetrahydrofolate and then the hydrolysis of 5,10-methenyltetrahydrofolate to 10-formyltetrahydrofolate. This is Bifunctional protein FolD from Prochlorococcus marinus (strain AS9601).